An 898-amino-acid polypeptide reads, in one-letter code: Sodium/hydrogen exchanger 5 (898 aa).

Topologically, residues 1-48 are cytoplasmic; that stretch reads MLSAALLLLPGLPLAGAGATEEPTQESGPLGEPPPGLALFRWQWHEVE. A helical membrane pass occupies residues 49–69; the sequence is APYLVALWILVASLAKIVFHL. Over 70–76 the chain is Extracellular; it reads SRKVTSL. Residues 77-97 traverse the membrane as a helical segment; it reads VPESCLLILLGLVLGGIVLAV. The Cytoplasmic segment spans residues 98-106; sequence AKKAEYQLE. Residues 107-127 form a helical membrane-spanning segment; sequence PGTFFLFLLPPIVLDSGYFMP. Residues 128 to 137 lie on the Extracellular side of the membrane; it reads SRLFFDNLGA. A helical transmembrane segment spans residues 138–158; sequence ILTYAVVGTLWNAFTTGVALW. Over 159–176 the chain is Cytoplasmic; the sequence is GLQQAGLVAPRVQAGLLD. A helical membrane pass occupies residues 177–197; the sequence is FLLFGSLISAVDPVAVLAVFE. Residues 198 to 203 are Extracellular-facing; that stretch reads EVHVNQ. The helical transmembrane segment at 204–224 threads the bilayer; the sequence is TLFIIIFGESLLNDAVTVVLY. The Cytoplasmic portion of the chain corresponds to 225 to 249; that stretch reads KVCNSFVEMGSANVQATDYLKGVAS. Residues 250-270 traverse the membrane as a helical segment; sequence LFVVSLGGAAVGLVFAFLLAL. The Extracellular portion of the chain corresponds to 271–279; it reads TTRFTKRVR. Residues 280–300 form a helical membrane-spanning segment; the sequence is IIEPLLVFLLAYAAYLTAEMA. At 301–334 the chain is on the cytoplasmic side; sequence SLSAILAVTMCGLGCKKYVEANISHKSRTAVKYT. A helical transmembrane segment spans residues 335-355; it reads MKTLASCAETVIFMLLGISAV. The Extracellular segment spans residues 356 to 363; that stretch reads DSSKWAWD. A helical membrane pass occupies residues 364–384; the sequence is SGLVLGTLFFILFFRALGVVL. Residues 385–401 are Cytoplasmic-facing; it reads QTWALNQFRLVPLDKID. The helical transmembrane segment at 402–422 threads the bilayer; that stretch reads QVVMSYGGLRGAVAFALVILL. Topologically, residues 423–431 are extracellular; it reads DRTKVPAKD. A helical membrane pass occupies residues 432-452; sequence YFVATTIVVVFFTVIVQGLTI. Topologically, residues 453 to 898 are cytoplasmic; sequence KPLVKWLRVK…CIQFNRGGRL (446 aa). 2 disordered regions span residues 660-693 and 826-866; these read FTKS…RDLG and EEPQ…PQQE. The segment covering 663 to 675 has biased composition (basic residues); that stretch reads SKPRPRKTSHKKK. Over residues 857 to 866 the composition is skewed to polar residues; that stretch reads ESSADIPQQE.

It belongs to the monovalent cation:proton antiporter 1 (CPA1) transporter (TC 2.A.36) family. In terms of assembly, interacts with CHP1 and CHP2. Interacts with ARRB2; facilitates the endocytosis of SLC9A5 from the plasma membrane. Interacts with RACK1; this interaction positively regulates SLC9A5 activity and promote SLC9A5 localization to focal adhesions. Interacts with SCAMP2; this interaction regulates SLC9A5 cell-surface targeting and SLC9A5 activity. Phosphorylated by PRKAA2; promotes its accumulation at the cell surface. Phosphorylated by CSNK2A1 in a manner favoring its beta-arrestin binding and endocytosis. As to expression, highest expression level is detected in brain. Expressed in hippocampal neurons (at protein level).

The protein resides in the cell membrane. Its subcellular location is the recycling endosome membrane. The protein localises to the cell projection. It is found in the dendritic spine membrane. It localises to the synaptic cell membrane. The protein resides in the cell junction. Its subcellular location is the focal adhesion. It catalyses the reaction Na(+)(in) + H(+)(out) = Na(+)(out) + H(+)(in). Its function is as follows. Plasma membrane Na(+)/H(+) antiporter. Mediates the electroneutral exchange of intracellular H(+) ions for extracellular Na(+) in 1:1 stoichiometry. Responsible for regulating intracellular pH homeostasis, in particular in neural tissues. Acts as a negative regulator of dendritic spine growth. Plays a role in postsynaptic remodeling and signaling. Can also contribute to organellar pH regulation, with consequences for receptor tyrosine kinase trafficking. The chain is Sodium/hydrogen exchanger 5 (Slc9a5) from Mus musculus (Mouse).